A 92-amino-acid polypeptide reads, in one-letter code: RNA-binding protein Hfq (92 aa).

The Sm domain occupies 9-68 (DPFLNALRRERVPVSVYLVNGIKLQGTIESFDQFVVLLRNTVSQMVYKHAISTVVPARNV).

The protein belongs to the Hfq family. Homohexamer.

Its function is as follows. RNA chaperone that binds small regulatory RNA (sRNAs) and mRNAs to facilitate mRNA translational regulation in response to envelope stress, environmental stress and changes in metabolite concentrations. Also binds with high specificity to tRNAs. This chain is RNA-binding protein Hfq, found in Xylella fastidiosa (strain M12).